Consider the following 410-residue polypeptide: Probable serine/threonine-protein kinase PBL9 (410 aa).

The N-myristoyl glycine moiety is linked to residue glycine 2. Cysteine 4 carries the S-palmitoyl cysteine lipid modification. The segment at 11-46 (AESSGASTKYDAKDIGSLGSKASSVSVRPSPRTEGE) is disordered. The 285-residue stretch at 68–352 (FRPDSVLGEG…MSEVVSHLEH (285 aa)) folds into the Protein kinase domain. ATP contacts are provided by residues 74 to 82 (LGEGGFGCV) and lysine 106. The residue at position 151 (tyrosine 151) is a Phosphotyrosine. Aspartate 203 serves as the catalytic Proton acceptor. A phosphoserine mark is found at serine 207 and serine 237. Phosphothreonine occurs at positions 238 and 243. Tyrosine 251 bears the Phosphotyrosine mark.

This sequence belongs to the protein kinase superfamily. Ser/Thr protein kinase family. In terms of assembly, interacts with the Xanthomonas campestris effector XopAC/AvrAC. Expressed in stomatal guard cells of leaves.

Its subcellular location is the cell membrane. It catalyses the reaction L-seryl-[protein] + ATP = O-phospho-L-seryl-[protein] + ADP + H(+). It carries out the reaction L-threonyl-[protein] + ATP = O-phospho-L-threonyl-[protein] + ADP + H(+). Functionally, possible bi-functional kinase. In vitro, it exhibits serine/threonine activity. In vivo, can phosphorylate tyrosine residues of limited substrates. May be involved in plant defense signaling. The chain is Probable serine/threonine-protein kinase PBL9 from Arabidopsis thaliana (Mouse-ear cress).